The following is a 214-amino-acid chain: CASP-like protein 3A1 (214 aa).

The Cytoplasmic segment spans residues 1–49 (MTNGQKIEVAVQLPESKVAATENNETMSGPLVVGGGVAKPFGRKADVMH). A helical transmembrane segment spans residues 50-70 (VILRLLCTITSVTAVSFMVTA). Over 71–96 (HQSSTVSIYGFMLPVRSKWSFSHSFE) the chain is Extracellular. The chain crosses the membrane as a helical span at residues 97 to 117 (YLVGVSAAVAAHSLLQLLISM). At 118-132 (SRLLRKSPVIPSRSH) the chain is on the cytoplasmic side. Residues 133-153 (AWLIFAGDQVFAYAMISAGAA) form a helical membrane-spanning segment. The Extracellular portion of the chain corresponds to 154-182 (ASGVTNLNRTGIQHTALPNFCKPLNYFCN). Asn-161 is a glycosylation site (N-linked (GlcNAc...) asparagine). A helical transmembrane segment spans residues 183–203 (HVAVSIAFAFISCLLLAALAV). Residues 204–214 (QEVIWLSKSKY) are Cytoplasmic-facing.

It belongs to the Casparian strip membrane proteins (CASP) family. Homodimer and heterodimers.

It is found in the cell membrane. This is CASP-like protein 3A1 from Ricinus communis (Castor bean).